A 323-amino-acid polypeptide reads, in one-letter code: tRNA U34 carboxymethyltransferase (323 aa).

Carboxy-S-adenosyl-L-methionine is bound by residues Lys-91, Trp-105, Lys-110, Gly-130, 152-154 (DPT), 181-182 (IE), Met-196, Tyr-200, and Arg-315.

Belongs to the class I-like SAM-binding methyltransferase superfamily. CmoB family. As to quaternary structure, homotetramer.

It catalyses the reaction carboxy-S-adenosyl-L-methionine + 5-hydroxyuridine(34) in tRNA = 5-carboxymethoxyuridine(34) in tRNA + S-adenosyl-L-homocysteine + H(+). In terms of biological role, catalyzes carboxymethyl transfer from carboxy-S-adenosyl-L-methionine (Cx-SAM) to 5-hydroxyuridine (ho5U) to form 5-carboxymethoxyuridine (cmo5U) at position 34 in tRNAs. The sequence is that of tRNA U34 carboxymethyltransferase from Salmonella paratyphi B (strain ATCC BAA-1250 / SPB7).